Reading from the N-terminus, the 473-residue chain is Sulfhydrylase-like protein lolC1 (473 aa).

An N6-(pyridoxal phosphate)lysine modification is found at Lys226.

Belongs to the trans-sulfuration enzymes family. The cofactor is pyridoxal 5'-phosphate.

Its pathway is alkaloid biosynthesis. Sulfhydrylase-like protein; part of the gene cluster that mediates the biosynthesis of loline alkaloids, potent insecticidal agents composed of a pyrrolizidine ring system and an uncommon ether bridge linking carbons 2 and 7. Lolines are structurally differentiated by the various modifications of the L-amino group and include norloline, loline, N-methylloline, N-acetylloline, N-acetylnorloline, and N-formylloline. The first committed step is the condensation of O-acetyl-L-homoserine (derived from L-aspartic acid) and L-proline, probably catalyzed by the gamma-type pyridoxal 5'-phosphate(PLP)-dependent enzyme lolC, to give the diamino diacid, NACPP. Ensuing cyclization, decarboxylation, and acetylation steps yield 1-exo-acetamidopyrrolizidine (AcAP). LolO is required for installation of the ether bridge upon the pathway intermediate, 1-exo-acetamidopyrrolizidine (AcAP). In sequential 2-oxoglutarate- and O(2)-consuming steps, lolO removes hydrogens from C2 and C7 of AcAP to form both carbon-oxygen bonds in N-acetylnorloline (NANL), the precursor to all other lolines. The enzymes lolD, lolE, lolF and lolT have also been proposed to be involved in the ether-bridge installation. Further processing of the exocyclic moiety of NANL by fungal N-acetamidase (LolN), methyltransferase (LolM), and cytochrome P450 (LolP) enzymes, with occasional involvement of a plant acetyltransferase, generates the other known lolines. LolN transforms NANL to norlonine which is monomethylated and dimethylated to respectively lonine and N-methyllonine (NML) by lolM. LolP catalyzes hydroxylation of the methyl group in N-methylloline (NML) and further oxygenation to N-formylloline (NFL). A plant acetyltransferase is responsible for the acetylation of loline to form N-acetylloline (NAL). LolA might interact with aspartate kinase to prevent feedback inhibition of its activity by these end products and thereby promote production of L-homoserine from L-aspartate. This is Sulfhydrylase-like protein lolC1 from Epichloe uncinata (Endophyte fungus).